The sequence spans 373 residues: MGYMCDFCGEQRSMVYCRSDAACLCLSCDRNVHSANALSKRHSRTLVCERCNAQPASVRCSDERVSLCQNCDWSGHDGKNSTTTSHHKRQTINCYSGCPSSAELSSIWSFCMDLNISSAEESACEQGMGLMTIDEDGTGEKSGVQKINVEQPETSSAAQGMDHSSVPENSSMAKELGVCEDDFNGNLISDEVDLALENYEELFGSAFNSSRYLFEHGGIGSLFEKDEAHEGSMQQPALSNNASADSFMTCRTEPIICYSSKPAHSNISFSGITGESNAGDFQDCGASSMKQLSREPQPWCHPTAQDIIASSHATTRNNAVMRYKEKKKARKFDKRVRYVSRKERADVRRRVKGRFVKSGEAYDYDPMSPTRSY.

8 residues coordinate Zn(2+): Cys-5, Cys-8, Cys-28, His-33, Cys-48, Cys-51, Cys-71, and His-76. The segment at 5-47 (CDFCGEQRSMVYCRSDAACLCLSCDRNVHSANALSKRHSRTLV) adopts a B box-type 1; atypical zinc-finger fold. A B box-type 2; atypical zinc finger spans residues 48–92 (CERCNAQPASVRCSDERVSLCQNCDWSGHDGKNSTTTSHHKRQTI). Positions 152-172 (PETSSAAQGMDHSSVPENSSM) are disordered. Residues 316-358 (RNNAVMRYKEKKKARKFDKRVRYVSRKERADVRRRVKGRFVKS) form the CCT domain.

Belongs to the CONSTANS family.

It is found in the nucleus. The chain is Zinc finger protein CONSTANS-LIKE 10 (COL10) from Arabidopsis thaliana (Mouse-ear cress).